Consider the following 470-residue polypeptide: 3-isopropylmalate dehydratase large subunit (470 aa).

The tract at residues 50–121 is disordered; that stretch reads NVARGCQHRH…PCGRPGAGRH (72 aa). Cys-349, Cys-409, and Cys-412 together coordinate [4Fe-4S] cluster.

Belongs to the aconitase/IPM isomerase family. LeuC type 1 subfamily. As to quaternary structure, heterodimer of LeuC and LeuD. Requires [4Fe-4S] cluster as cofactor.

It catalyses the reaction (2R,3S)-3-isopropylmalate = (2S)-2-isopropylmalate. The protein operates within amino-acid biosynthesis; L-leucine biosynthesis; L-leucine from 3-methyl-2-oxobutanoate: step 2/4. Functionally, catalyzes the isomerization between 2-isopropylmalate and 3-isopropylmalate, via the formation of 2-isopropylmaleate. This is 3-isopropylmalate dehydratase large subunit from Azotobacter vinelandii.